The sequence spans 140 residues: D-ribose pyranase (140 aa).

The Proton donor role is filled by His-20. Substrate is bound by residues Asp-28, His-99, and 121–123 (YSS).

It belongs to the RbsD / FucU family. RbsD subfamily. Homodecamer.

It localises to the cytoplasm. The enzyme catalyses beta-D-ribopyranose = beta-D-ribofuranose. The protein operates within carbohydrate metabolism; D-ribose degradation; D-ribose 5-phosphate from beta-D-ribopyranose: step 1/2. Its function is as follows. Catalyzes the interconversion of beta-pyran and beta-furan forms of D-ribose. The chain is D-ribose pyranase from Pseudothermotoga lettingae (strain ATCC BAA-301 / DSM 14385 / NBRC 107922 / TMO) (Thermotoga lettingae).